We begin with the raw amino-acid sequence, 316 residues long: Adenine deaminase (316 aa).

Zn(2+) is bound by residues His14, His16, and His194. The active-site Proton donor is the Glu197. Asp275 serves as a coordination point for Zn(2+). Asp276 provides a ligand contact to substrate.

This sequence belongs to the metallo-dependent hydrolases superfamily. Adenosine and AMP deaminases family. Adenine deaminase type 2 subfamily. Zn(2+) serves as cofactor.

It carries out the reaction adenine + H2O + H(+) = hypoxanthine + NH4(+). In terms of biological role, catalyzes the hydrolytic deamination of adenine to hypoxanthine. Plays an important role in the purine salvage pathway and in nitrogen catabolism. This is Adenine deaminase from Pseudomonas entomophila (strain L48).